The primary structure comprises 318 residues: AT-hook motif nuclear-localized protein 7 (318 aa).

Disordered stretches follow at residues 1–76 and 241–318; these read METS…PSSS and SDQQ…LPVD. A Bipartite nuclear localization signal motif is present at residues 56 to 64; sequence KKRRGRPRK. Positions 56–68 form a DNA-binding region, a.T hook; sequence KKRRGRPRKYEAN. A PPC domain is found at 120–259; the sequence is GSNFTPHVIT…RKQRVEHAPA (140 aa). Basic and acidic residues predominate over residues 243–256; it reads QQDHQKPRKQRVEH. Residues 264–274 are compositionally biased toward pro residues; that stretch reads VPPPPSPPPPA. The segment covering 288–312 has biased composition (polar residues); that stretch reads PPSSFGISSWTNGQDMPRNSATDIN.

The protein resides in the nucleus. Transcription factor that specifically binds AT-rich DNA sequences related to the nuclear matrix attachment regions (MARs). The protein is AT-hook motif nuclear-localized protein 7 of Arabidopsis thaliana (Mouse-ear cress).